The chain runs to 87 residues: Omega-lycotoxin-Am1d (87 aa).

Residues Met1–Cys17 form the signal peptide. A propeptide spanning residues Gln18–Arg40 is cleaved from the precursor. 4 cysteine pairs are disulfide-bonded: Cys44/Cys59, Cys51/Cys64, Cys58/Cys84, and Cys66/Cys82.

This sequence belongs to the neurotoxin omega-lctx family. In terms of tissue distribution, expressed by the venom gland.

The protein localises to the secreted. Modulates Cav2.1/CACNA1A voltage-gated calcium channels (P/Q-type currents) in rat cerebellar Purkinje cells and hippocampal CA1-CA3 neurons. At saturating concentrations (&gt;10 nM) decelerates activation kinetics and slightly increases peak amplitude without affecting deactivation kinetics. In vivo, does not cause death when intravenously injected into mice. In rat models, through its activity on Cav2.1/CACNA1A, has an ameliorative effect on memory defects provoked by hyperstimulation of N-methyl-D-aspartate receptors (NMDARs) in the hippocampus. The polypeptide is Omega-lycotoxin-Am1d (Alopecosa marikovskyi (Wolf spider)).